A 431-amino-acid chain; its full sequence is Isochorismate synthase MenF (431 aa).

The Proton acceptor role is filled by Lys-183. The active-site Proton donor is the Glu-233. Mg(2+)-binding residues include Glu-277 and Glu-414.

The protein belongs to the isochorismate synthase family. It depends on Mg(2+) as a cofactor.

The enzyme catalyses chorismate = isochorismate. It functions in the pathway quinol/quinone metabolism; 1,4-dihydroxy-2-naphthoate biosynthesis; 1,4-dihydroxy-2-naphthoate from chorismate: step 1/7. The protein operates within quinol/quinone metabolism; menaquinone biosynthesis. Catalyzes the conversion of chorismate to isochorismate. This Pasteurella multocida (strain Pm70) protein is Isochorismate synthase MenF.